The sequence spans 47 residues: uncharacterized protein (47 aa).

Residues 24–47 form a disordered region; it reads FGPNPIEPPTDIAPDPDSTKTWLI.

This is an uncharacterized protein from Mycobacterium tuberculosis (strain ATCC 25618 / H37Rv).